Here is a 360-residue protein sequence, read N- to C-terminus: DNA replication and repair protein RecF (360 aa).

30–37 (GQNGSGKT) contacts ATP.

The protein belongs to the RecF family.

The protein localises to the cytoplasm. Its function is as follows. The RecF protein is involved in DNA metabolism; it is required for DNA replication and normal SOS inducibility. RecF binds preferentially to single-stranded, linear DNA. It also seems to bind ATP. This is DNA replication and repair protein RecF from Shewanella sp. (strain MR-7).